An 88-amino-acid polypeptide reads, in one-letter code: Small ribosomal subunit protein uS15c (88 aa).

The protein belongs to the universal ribosomal protein uS15 family. Part of the 30S ribosomal subunit.

It localises to the plastid. The protein resides in the chloroplast. The protein is Small ribosomal subunit protein uS15c (rps15) of Lobularia maritima (Sweet alyssum).